A 414-amino-acid polypeptide reads, in one-letter code: 2,3-diketo-5-methylthiopentyl-1-phosphate enolase (414 aa).

Catalysis depends on K99, which acts as the Proton acceptor. Residues K148, 174–177 (KDDE), H265, G338, and 360–361 (GG) each bind substrate. Mg(2+)-binding residues include K174, D176, and E177. K174 is modified (N6-carboxylysine).

This sequence belongs to the RuBisCO large chain family. Type IV subfamily. In terms of assembly, homodimer. Requires Mg(2+) as cofactor.

It carries out the reaction 5-methylsulfanyl-2,3-dioxopentyl phosphate = 2-hydroxy-5-methylsulfanyl-3-oxopent-1-enyl phosphate. The protein operates within amino-acid biosynthesis; L-methionine biosynthesis via salvage pathway; L-methionine from S-methyl-5-thio-alpha-D-ribose 1-phosphate: step 3/6. Catalyzes the enolization of 2,3-diketo-5-methylthiopentyl-1-phosphate (DK-MTP-1-P) into 2-hydroxy-3-keto-5-methylthiopentenyl-1-phosphate (HK-MTPenyl-1-P). This chain is 2,3-diketo-5-methylthiopentyl-1-phosphate enolase, found in Bacillus cereus (strain Q1).